Here is a 2130-residue protein sequence, read N- to C-terminus: DNA polymerase zeta catalytic subunit (2130 aa).

Disordered stretches follow at residues 528–635 (PAES…TGTL), 734–891 (GCEI…HDEA), 927–954 (FTPSSGIRPPETETTPQLSPKSNESNTP), and 1189–1243 (QAKD…SAAQ). A compositionally biased stretch (low complexity) spans 553-574 (TPIKSISSKSKSSPSKTPTTPI). Residues 620-629 (PRLSLQLDQG) are compositionally biased toward polar residues. A compositionally biased stretch (basic and acidic residues) spans 735–753 (CEIERPHRSEGSALDELKP). Polar residues-rich tracts occupy residues 771 to 786 (SEIQTTGPRVTTTSLD), 794 to 808 (LSQSPKENTKTSMNG), and 818 to 835 (DSSSNSESPHQQENSVSE). The span at 840–860 (LESKPKKSDETARSCDEKLQR) shows a compositional bias: basic and acidic residues. Over residues 938 to 954 (TETTPQLSPKSNESNTP) the composition is skewed to polar residues. Low complexity predominate over residues 1228–1243 (PSSQSSEQSVSSSAAQ). Positions 2041, 2045, 2054, and 2057 each coordinate Zn(2+). [4Fe-4S] cluster is bound by residues cysteine 2086, cysteine 2089, cysteine 2098, and cysteine 2103. The short motif at 2086–2103 (CQACCGRLGSLQCDSLDC) is the CysB motif element.

Belongs to the DNA polymerase type-B family. In terms of assembly, catalytic subunit of the zeta DNA polymerase complex, which consists of PolZ1/DNApol-zeta and the accessory component PolZ2/Rev7. Interacts with the apurinic/apyrimidinic (AP) endonuclease Rrp1; the interaction is likely indirect and mediated via PolZ2. It depends on [4Fe-4S] cluster as a cofactor.

It catalyses the reaction DNA(n) + a 2'-deoxyribonucleoside 5'-triphosphate = DNA(n+1) + diphosphate. Inhibited by tetracyclic diterpene antibiotic aphidicolin. As the catalytic subunit of the DNA polymerase zeta complex, plays a crucial role in translesion DNA synthesis (TLS) and various DNA repair mechanisms. Lacks an intrinsic 3'-5' exonuclease activity and thus has no proofreading function. During homologous recombination (HR) repair, has a overlapping role with the error-prone translesion polymerase eta to initiate repair synthesis which is completed by end joining or another polymerase that can bind and reinitiate synthesis. May participate in the Rrp1-dependent base excision repair (BER) pathway responsible for repair of DNA lesions that gives rise to apurinic/apyrimidinic (AP) sites. Unlike mammalian orthologs, it is not an error-prone polymerase. The sequence is that of DNA polymerase zeta catalytic subunit from Drosophila melanogaster (Fruit fly).